The chain runs to 503 residues: Lysine--tRNA ligase (503 aa).

Mg(2+) is bound by residues glutamate 414 and glutamate 421.

The protein belongs to the class-II aminoacyl-tRNA synthetase family. Homodimer. The cofactor is Mg(2+).

It localises to the cytoplasm. The catalysed reaction is tRNA(Lys) + L-lysine + ATP = L-lysyl-tRNA(Lys) + AMP + diphosphate. The protein is Lysine--tRNA ligase of Neisseria gonorrhoeae (strain ATCC 700825 / FA 1090).